Consider the following 283-residue polypeptide: 5'-nucleotidase SurE (283 aa).

Residues aspartate 14, aspartate 15, serine 47, and asparagine 105 each contribute to the a divalent metal cation site.

Belongs to the SurE nucleotidase family. It depends on a divalent metal cation as a cofactor.

Its subcellular location is the cytoplasm. The catalysed reaction is a ribonucleoside 5'-phosphate + H2O = a ribonucleoside + phosphate. Functionally, nucleotidase that shows phosphatase activity on nucleoside 5'-monophosphates. This chain is 5'-nucleotidase SurE, found in Chlamydia trachomatis serovar L2 (strain ATCC VR-902B / DSM 19102 / 434/Bu).